The chain runs to 264 residues: Carbonic anhydrase 7 (264 aa).

The Alpha-carbonic anhydrase domain occupies 5 to 262 (HCWGYGQDDG…LKGRVVKASF (258 aa)). Catalysis depends on H66, which acts as the Proton donor/acceptor. H96, H98, and H121 together coordinate Zn(2+). Substrate is bound at residue 201-202 (TT).

Belongs to the alpha-carbonic anhydrase family. Zn(2+) is required as a cofactor.

It localises to the cytoplasm. The catalysed reaction is hydrogencarbonate + H(+) = CO2 + H2O. In terms of biological role, reversible hydration of carbon dioxide. In Mus musculus (Mouse), this protein is Carbonic anhydrase 7 (Ca7).